Here is a 229-residue protein sequence, read N- to C-terminus: Adenosylcobinamide-GDP ribazoletransferase (229 aa).

Transmembrane regions (helical) follow at residues 31-51 (AMLL…AVLA), 55-75 (AVEL…AASS), 111-131 (AGVL…ATLL), 134-154 (PLLA…VCCT), 176-196 (VAVL…LVLV), and 208-228 (GDVM…AWAA).

Belongs to the CobS family. It depends on Mg(2+) as a cofactor.

The protein localises to the cell membrane. The enzyme catalyses alpha-ribazole + adenosylcob(III)inamide-GDP = adenosylcob(III)alamin + GMP + H(+). It carries out the reaction alpha-ribazole 5'-phosphate + adenosylcob(III)inamide-GDP = adenosylcob(III)alamin 5'-phosphate + GMP + H(+). It functions in the pathway cofactor biosynthesis; adenosylcobalamin biosynthesis; adenosylcobalamin from cob(II)yrinate a,c-diamide: step 7/7. Its function is as follows. Joins adenosylcobinamide-GDP and alpha-ribazole to generate adenosylcobalamin (Ado-cobalamin). Also synthesizes adenosylcobalamin 5'-phosphate from adenosylcobinamide-GDP and alpha-ribazole 5'-phosphate. This chain is Adenosylcobinamide-GDP ribazoletransferase, found in Nocardioides sp. (strain ATCC BAA-499 / JS614).